Here is a 229-residue protein sequence, read N- to C-terminus: MAKKSKQMRAALEKVDSTKAYSVEEAVALIKETNFAKFDASVEVAYNLNIDVRKADQQIRGAMVLPNGTGKTQRVLVFARGAKAEEAKAAGADFVGEDDLVAKINGGWLDFDVVIATPDMMAIVGRLGRVLGPRNLMPNPKTGTVTMDVAKAVEESKGGKITYRADKAGNVQAIIGKVSFDADKLVENFKAFNDVMVKSKPSTAKGTYMTNVSITSTQGVGIKVDPSSL.

Belongs to the universal ribosomal protein uL1 family. As to quaternary structure, part of the 50S ribosomal subunit.

Its function is as follows. Binds directly to 23S rRNA. The L1 stalk is quite mobile in the ribosome, and is involved in E site tRNA release. In terms of biological role, protein L1 is also a translational repressor protein, it controls the translation of the L11 operon by binding to its mRNA. This chain is Large ribosomal subunit protein uL1, found in Streptococcus uberis (strain ATCC BAA-854 / 0140J).